We begin with the raw amino-acid sequence, 184 residues long: Adenine phosphoribosyltransferase (184 aa).

The protein belongs to the purine/pyrimidine phosphoribosyltransferase family. In terms of assembly, homodimer.

Its subcellular location is the cytoplasm. The catalysed reaction is AMP + diphosphate = 5-phospho-alpha-D-ribose 1-diphosphate + adenine. Its pathway is purine metabolism; AMP biosynthesis via salvage pathway; AMP from adenine: step 1/1. Catalyzes a salvage reaction resulting in the formation of AMP, that is energically less costly than de novo synthesis. This is Adenine phosphoribosyltransferase from Shewanella putrefaciens (strain CN-32 / ATCC BAA-453).